The following is a 364-amino-acid chain: Methylthioribose-1-phosphate isomerase (364 aa).

Aspartate 254 serves as the catalytic Proton donor.

This sequence belongs to the eIF-2B alpha/beta/delta subunits family. MtnA subfamily.

The protein localises to the cytoplasm. It is found in the nucleus. It catalyses the reaction 5-(methylsulfanyl)-alpha-D-ribose 1-phosphate = 5-(methylsulfanyl)-D-ribulose 1-phosphate. Its pathway is amino-acid biosynthesis; L-methionine biosynthesis via salvage pathway; L-methionine from S-methyl-5-thio-alpha-D-ribose 1-phosphate: step 1/6. Functionally, catalyzes the interconversion of methylthioribose-1-phosphate (MTR-1-P) into methylthioribulose-1-phosphate (MTRu-1-P). This Drosophila erecta (Fruit fly) protein is Methylthioribose-1-phosphate isomerase.